Here is a 122-residue protein sequence, read N- to C-terminus: ATP synthase epsilon chain (122 aa).

Belongs to the ATPase epsilon chain family. As to quaternary structure, F-type ATPases have 2 components, CF(1) - the catalytic core - and CF(0) - the membrane proton channel. CF(1) has five subunits: alpha(3), beta(3), gamma(1), delta(1), epsilon(1). CF(0) has three main subunits: a, b and c.

The protein localises to the cell membrane. In terms of biological role, produces ATP from ADP in the presence of a proton gradient across the membrane. This chain is ATP synthase epsilon chain, found in Rhodococcus opacus (strain B4).